The sequence spans 246 residues: Orotidine 5'-phosphate decarboxylase (246 aa).

Residues Asp-18, Lys-39, 66 to 75 (DLKFHDIPAT), Thr-130, Arg-192, Gln-201, Gly-221, and Arg-222 each bind substrate. Lys-68 functions as the Proton donor in the catalytic mechanism.

Belongs to the OMP decarboxylase family. Type 1 subfamily. Homodimer.

The catalysed reaction is orotidine 5'-phosphate + H(+) = UMP + CO2. The protein operates within pyrimidine metabolism; UMP biosynthesis via de novo pathway; UMP from orotate: step 2/2. Its function is as follows. Catalyzes the decarboxylation of orotidine 5'-monophosphate (OMP) to uridine 5'-monophosphate (UMP). The chain is Orotidine 5'-phosphate decarboxylase from Parasynechococcus marenigrum (strain WH8102).